Consider the following 158-residue polypeptide: SsrA-binding protein (158 aa).

Residues 132 to 158 (KKTHDKRETEKKRDWNREKARLMRDKG) are disordered. Residues 136–158 (DKRETEKKRDWNREKARLMRDKG) show a composition bias toward basic and acidic residues.

Belongs to the SmpB family.

It is found in the cytoplasm. Functionally, required for rescue of stalled ribosomes mediated by trans-translation. Binds to transfer-messenger RNA (tmRNA), required for stable association of tmRNA with ribosomes. tmRNA and SmpB together mimic tRNA shape, replacing the anticodon stem-loop with SmpB. tmRNA is encoded by the ssrA gene; the 2 termini fold to resemble tRNA(Ala) and it encodes a 'tag peptide', a short internal open reading frame. During trans-translation Ala-aminoacylated tmRNA acts like a tRNA, entering the A-site of stalled ribosomes, displacing the stalled mRNA. The ribosome then switches to translate the ORF on the tmRNA; the nascent peptide is terminated with the 'tag peptide' encoded by the tmRNA and targeted for degradation. The ribosome is freed to recommence translation, which seems to be the essential function of trans-translation. This Brucella anthropi (strain ATCC 49188 / DSM 6882 / CCUG 24695 / JCM 21032 / LMG 3331 / NBRC 15819 / NCTC 12168 / Alc 37) (Ochrobactrum anthropi) protein is SsrA-binding protein.